The chain runs to 355 residues: Mu-like prophage FluMu protein gp47 (355 aa).

Belongs to the Mu gp47/PBSX XkdT family.

This chain is Mu-like prophage FluMu protein gp47, found in Haemophilus influenzae (strain ATCC 51907 / DSM 11121 / KW20 / Rd).